The sequence spans 394 residues: Probable peptidoglycan glycosyltransferase FtsW (394 aa).

Over 1–27 the chain is Cytoplasmic; sequence MSALRSVAGLLQRWLLPARPAGLYDRQ. A helical membrane pass occupies residues 28-48; the sequence is LVVLALALMAVGLVIVASASI. Residues 49–64 lie on the Periplasmic side of the membrane; sequence PEGIAINNDPFMFVKR. Residues 65–85 traverse the membrane as a helical segment; the sequence is HGLFLVMALGISWFVLQVPMA. Topologically, residues 86 to 88 are cytoplasmic; it reads RWQ. Residues 89-109 traverse the membrane as a helical segment; the sequence is HYNGPMLVLAILMLVLVLLVG. At 110 to 123 the chain is on the periplasmic side; sequence RSVNGSIRWLPLGP. The chain crosses the membrane as a helical span at residues 124–144; it reads FNLQPAEFGKLALFVYLAGYL. At 145–154 the chain is on the cytoplasmic side; it reads VRRQSEVRER. The helical transmembrane segment at 155 to 175 threads the bilayer; sequence FIGFMKPMAVLFVVAILLLAQ. A topological domain (periplasmic) is located at residue proline 176. The helical transmembrane segment at 177–197 threads the bilayer; that stretch reads DLGSVVVMFVTSLGMLFLAGA. Arginine 198 is a topological domain (cytoplasmic). A helical transmembrane segment spans residues 199-219; the sequence is LGQFIGLILVGVSAVVTLVIA. The Periplasmic segment spans residues 220-279; it reads EPYRMRRVTSFLDPWADPFGSGYQLTQSLMAFGRGSWFGEGLGNSIQKMEYLPEAHTDFV. A helical membrane pass occupies residues 280–300; it reads FAILGEELGYAGVLGALFLIF. At 301 to 322 the chain is on the cytoplasmic side; that stretch reads ALSFKALKLGHQALVAERLYEG. The chain crosses the membrane as a helical span at residues 323-343; it reads YLAIGIGIWFSFQTFVNVGAA. The Periplasmic segment spans residues 344 to 354; that stretch reads SGMMPTKGLTL. The chain crosses the membrane as a helical span at residues 355 to 375; it reads PLVSYGGSSLIIMMVAVSMLV. Residues 376–394 are Cytoplasmic-facing; it reads RIDFELRQASAQARVREVS.

The protein belongs to the SEDS family. FtsW subfamily.

Its subcellular location is the cell inner membrane. The catalysed reaction is [GlcNAc-(1-&gt;4)-Mur2Ac(oyl-L-Ala-gamma-D-Glu-L-Lys-D-Ala-D-Ala)](n)-di-trans,octa-cis-undecaprenyl diphosphate + beta-D-GlcNAc-(1-&gt;4)-Mur2Ac(oyl-L-Ala-gamma-D-Glu-L-Lys-D-Ala-D-Ala)-di-trans,octa-cis-undecaprenyl diphosphate = [GlcNAc-(1-&gt;4)-Mur2Ac(oyl-L-Ala-gamma-D-Glu-L-Lys-D-Ala-D-Ala)](n+1)-di-trans,octa-cis-undecaprenyl diphosphate + di-trans,octa-cis-undecaprenyl diphosphate + H(+). It participates in cell wall biogenesis; peptidoglycan biosynthesis. Functionally, peptidoglycan polymerase that is essential for cell division. The polypeptide is Probable peptidoglycan glycosyltransferase FtsW (Aeromonas salmonicida (strain A449)).